The chain runs to 162 residues: uncharacterized protein (162 aa).

This is an uncharacterized protein from Frog virus 3 (isolate Goorha) (FV-3).